A 336-amino-acid chain; its full sequence is Glyceraldehyde-3-phosphate dehydrogenase (336 aa).

NAD(+)-binding positions include 12-13 (RI), Asp34, and Ser120. D-glyceraldehyde 3-phosphate-binding positions include 150–152 (SCT), Thr181, Arg198, 211–212 (TG), and Arg234. Residue Cys151 is the Nucleophile of the active site. Asn316 provides a ligand contact to NAD(+).

The protein belongs to the glyceraldehyde-3-phosphate dehydrogenase family. In terms of assembly, homotetramer.

It localises to the cytoplasm. It catalyses the reaction D-glyceraldehyde 3-phosphate + phosphate + NAD(+) = (2R)-3-phospho-glyceroyl phosphate + NADH + H(+). Its pathway is carbohydrate degradation; glycolysis; pyruvate from D-glyceraldehyde 3-phosphate: step 1/5. Functionally, catalyzes the oxidative phosphorylation of glyceraldehyde 3-phosphate (G3P) to 1,3-bisphosphoglycerate (BPG) using the cofactor NAD. The first reaction step involves the formation of a hemiacetal intermediate between G3P and a cysteine residue, and this hemiacetal intermediate is then oxidized to a thioester, with concomitant reduction of NAD to NADH. The reduced NADH is then exchanged with the second NAD, and the thioester is attacked by a nucleophilic inorganic phosphate to produce BPG. The sequence is that of Glyceraldehyde-3-phosphate dehydrogenase (gapA) from Staphylococcus aureus.